A 120-amino-acid polypeptide reads, in one-letter code: Ribonuclease P protein component 2 (120 aa).

The protein belongs to the eukaryotic/archaeal RNase P protein component 2 family. In terms of assembly, homodimer in solution. Component of RNase P which consists of a catalytic RNA component and at least 5 protein subunits. Forms a heterotetrameric subcomplex with Rnp3. Reconstituted enzyme missing individual protein subunits is suboptimally active, showing each subunit contributes to optimization of activity.

Its subcellular location is the cytoplasm. The catalysed reaction is Endonucleolytic cleavage of RNA, removing 5'-extranucleotides from tRNA precursor.. Part of ribonuclease P, a protein complex that generates mature tRNA molecules by cleaving their 5'-ends. This chain is Ribonuclease P protein component 2, found in Pyrococcus horikoshii (strain ATCC 700860 / DSM 12428 / JCM 9974 / NBRC 100139 / OT-3).